The primary structure comprises 728 residues: 1,4-alpha-glucan branching enzyme GlgB (728 aa).

Asp405 acts as the Nucleophile in catalysis. Catalysis depends on Glu458, which acts as the Proton donor.

The protein belongs to the glycosyl hydrolase 13 family. GlgB subfamily. Monomer.

The enzyme catalyses Transfers a segment of a (1-&gt;4)-alpha-D-glucan chain to a primary hydroxy group in a similar glucan chain.. Its pathway is glycan biosynthesis; glycogen biosynthesis. Functionally, catalyzes the formation of the alpha-1,6-glucosidic linkages in glycogen by scission of a 1,4-alpha-linked oligosaccharide from growing alpha-1,4-glucan chains and the subsequent attachment of the oligosaccharide to the alpha-1,6 position. This chain is 1,4-alpha-glucan branching enzyme GlgB, found in Citrobacter koseri (strain ATCC BAA-895 / CDC 4225-83 / SGSC4696).